A 311-amino-acid polypeptide reads, in one-letter code: Apolipoprotein E (311 aa).

The N-terminal stretch at 1-18 (MKVWWAVLAAAILAGCRA) is a signal peptide. 8 tandem repeats follow at residues 74-95 (MLME…EQLS), 96-116 (PMAQ…GALE), 117-138 (ADME…AMLG), 139-160 (QSTE…KRLL), 161-182 (RDAE…EGAE), 183-204 (RGVS…LRVA), 205-226 (TVGT…ERLR), and 227-248 (GHLE…EQVE). Residues 74 to 248 (MLMEETMKEV…RLNEVREQVE (175 aa)) form an 8 X 22 AA approximate tandem repeats region. Met136 carries the methionine sulfoxide modification. Ser140 bears the Phosphoserine mark. Positions 151–161 (HLRKLRKRLLR) are LDL and other lipoprotein receptors binding. 155 to 158 (LRKR) provides a ligand contact to heparin. Positions 203 to 283 (VATVGTLAGR…SWFEPLVEDM (81 aa)) are lipid-binding and lipoprotein association. Thr205 carries an O-linked (GalNAc...) threonine glycan. 222-229 (GERLRGHL) lines the heparin pocket. Residues 259 to 311 (PQMRLQAEAFQARLKSWFEPLVEDMQRQWAGLVEKLQAAMPSKAPAAAPIENQ) are homooligomerization. The interval 271–283 (RLKSWFEPLVEDM) is specificity for association with VLDL.

This sequence belongs to the apolipoprotein A1/A4/E family. As to quaternary structure, homotetramer. May interact with ABCA1; functionally associated with ABCA1 in the biogenesis of HDLs. May interact with APP/A4 amyloid-beta peptide; the interaction is extremely stable in vitro but its physiological significance is unclear. May interact with MAPT. May interact with MAP2. In the cerebrospinal fluid, interacts with secreted SORL1. Interacts with PMEL; this allows the loading of PMEL luminal fragment on ILVs to induce fibril nucleation. APOE exists as multiple glycosylated and sialylated glycoforms within cells and in plasma. The extent of glycosylation and sialylation are tissue and context specific. Post-translationally, glycated in plasma VLDL. In terms of processing, phosphorylated by FAM20C in the extracellular medium.

The protein resides in the secreted. Its subcellular location is the extracellular space. It is found in the extracellular matrix. It localises to the extracellular vesicle. The protein localises to the endosome. The protein resides in the multivesicular body. Functionally, APOE is an apolipoprotein, a protein associating with lipid particles, that mainly functions in lipoprotein-mediated lipid transport between organs via the plasma and interstitial fluids. APOE is a core component of plasma lipoproteins and is involved in their production, conversion and clearance. Apolipoproteins are amphipathic molecules that interact both with lipids of the lipoprotein particle core and the aqueous environment of the plasma. As such, APOE associates with chylomicrons, chylomicron remnants, very low density lipoproteins (VLDL) and intermediate density lipoproteins (IDL) but shows a preferential binding to high-density lipoproteins (HDL). It also binds a wide range of cellular receptors including the LDL receptor/LDLR and the very low-density lipoprotein receptor/VLDLR that mediate the cellular uptake of the APOE-containing lipoprotein particles. Finally, APOE also has a heparin-binding activity and binds heparan-sulfate proteoglycans on the surface of cells, a property that supports the capture and the receptor-mediated uptake of APOE-containing lipoproteins by cells. The chain is Apolipoprotein E (APOE) from Oryctolagus cuniculus (Rabbit).